Consider the following 217-residue polypeptide: Small ribosomal subunit protein uS2 (217 aa).

Belongs to the universal ribosomal protein uS2 family.

The sequence is that of Small ribosomal subunit protein uS2 from Korarchaeum cryptofilum (strain OPF8).